A 219-amino-acid polypeptide reads, in one-letter code: LexA repressor (219 aa).

Positions Arg28–Gln48 form a DNA-binding region, H-T-H motif. Residues Ser138 and Lys175 each act as for autocatalytic cleavage activity in the active site.

Belongs to the peptidase S24 family. Homodimer.

It catalyses the reaction Hydrolysis of Ala-|-Gly bond in repressor LexA.. In terms of biological role, represses a number of genes involved in the response to DNA damage (SOS response), including recA and lexA. In the presence of single-stranded DNA, RecA interacts with LexA causing an autocatalytic cleavage which disrupts the DNA-binding part of LexA, leading to derepression of the SOS regulon and eventually DNA repair. This Herminiimonas arsenicoxydans protein is LexA repressor.